The chain runs to 364 residues: Phosphoserine aminotransferase (364 aa).

Arg41 is an L-glutamate binding site. Pyridoxal 5'-phosphate is bound by residues 75–76, Trp100, Thr155, and Gln198; that span reads AS. Lys199 carries the post-translational modification N6-(pyridoxal phosphate)lysine. 239–240 is a pyridoxal 5'-phosphate binding site; the sequence is NT.

The protein belongs to the class-V pyridoxal-phosphate-dependent aminotransferase family. SerC subfamily. In terms of assembly, homodimer. The cofactor is pyridoxal 5'-phosphate.

Its subcellular location is the cytoplasm. It carries out the reaction O-phospho-L-serine + 2-oxoglutarate = 3-phosphooxypyruvate + L-glutamate. The catalysed reaction is 4-(phosphooxy)-L-threonine + 2-oxoglutarate = (R)-3-hydroxy-2-oxo-4-phosphooxybutanoate + L-glutamate. It participates in amino-acid biosynthesis; L-serine biosynthesis; L-serine from 3-phospho-D-glycerate: step 2/3. Functionally, catalyzes the reversible conversion of 3-phosphohydroxypyruvate to phosphoserine and of 3-hydroxy-2-oxo-4-phosphonooxybutanoate to phosphohydroxythreonine. The polypeptide is Phosphoserine aminotransferase (Streptococcus thermophilus (strain ATCC BAA-250 / LMG 18311)).